We begin with the raw amino-acid sequence, 417 residues long: Serine--tRNA ligase (417 aa).

224–226 (TSE) is a binding site for L-serine. ATP is bound by residues 255-257 (RRE) and valine 271. Residue glutamate 278 coordinates L-serine. 342-345 (ELTS) serves as a coordination point for ATP. L-serine is bound at residue threonine 377.

This sequence belongs to the class-II aminoacyl-tRNA synthetase family. Type-1 seryl-tRNA synthetase subfamily. In terms of assembly, homodimer. The tRNA molecule binds across the dimer.

It is found in the cytoplasm. The catalysed reaction is tRNA(Ser) + L-serine + ATP = L-seryl-tRNA(Ser) + AMP + diphosphate + H(+). The enzyme catalyses tRNA(Sec) + L-serine + ATP = L-seryl-tRNA(Sec) + AMP + diphosphate + H(+). It functions in the pathway aminoacyl-tRNA biosynthesis; selenocysteinyl-tRNA(Sec) biosynthesis; L-seryl-tRNA(Sec) from L-serine and tRNA(Sec): step 1/1. Catalyzes the attachment of serine to tRNA(Ser). Is also able to aminoacylate tRNA(Sec) with serine, to form the misacylated tRNA L-seryl-tRNA(Sec), which will be further converted into selenocysteinyl-tRNA(Sec). This Mycobacterium leprae (strain TN) protein is Serine--tRNA ligase.